The primary structure comprises 878 residues: Aconitate hydratase A (878 aa).

The [4Fe-4S] cluster site is built by Cys426, Cys492, and Cys495.

It belongs to the aconitase/IPM isomerase family. In terms of assembly, monomer. It depends on [4Fe-4S] cluster as a cofactor.

It carries out the reaction citrate = D-threo-isocitrate. The catalysed reaction is (2S,3R)-3-hydroxybutane-1,2,3-tricarboxylate = 2-methyl-cis-aconitate + H2O. It participates in carbohydrate metabolism; tricarboxylic acid cycle; isocitrate from oxaloacetate: step 2/2. Its pathway is organic acid metabolism; propanoate degradation. Its function is as follows. Involved in the catabolism of short chain fatty acids (SCFA) via the tricarboxylic acid (TCA)(acetyl degradation route) and probably the 2-methylcitrate cycle I (propionate degradation route). Catalyzes the reversible isomerization of citrate to isocitrate via cis-aconitate. Could catalyze the hydration of 2-methyl-cis-aconitate to yield (2R,3S)-2-methylisocitrate. The apo form of AcnA functions as a RNA-binding regulatory protein. The chain is Aconitate hydratase A (acnA) from Rickettsia felis (strain ATCC VR-1525 / URRWXCal2) (Rickettsia azadi).